Consider the following 147-residue polypeptide: uncharacterized protein (147 aa).

A helical membrane pass occupies residues 69-89; sequence IFFFLSLYLSSIKIPMLILNI.

It is found in the membrane. This is an uncharacterized protein from Saccharomyces cerevisiae (strain ATCC 204508 / S288c) (Baker's yeast).